The sequence spans 811 residues: DNA gyrase subunit A (811 aa).

The Topo IIA-type catalytic domain maps to 30 to 493 (LPDVRDGLKP…LEEDIGKEDL (464 aa)). Residue Y118 is the O-(5'-phospho-DNA)-tyrosine intermediate of the active site. Residues 520–526 (QGRGGRG) carry the GyrA-box motif.

This sequence belongs to the type II topoisomerase GyrA/ParC subunit family. Heterotetramer, composed of two GyrA and two GyrB chains. In the heterotetramer, GyrA contains the active site tyrosine that forms a transient covalent intermediate with DNA, while GyrB binds cofactors and catalyzes ATP hydrolysis.

It localises to the cytoplasm. The catalysed reaction is ATP-dependent breakage, passage and rejoining of double-stranded DNA.. Its function is as follows. A type II topoisomerase that negatively supercoils closed circular double-stranded (ds) DNA in an ATP-dependent manner to modulate DNA topology and maintain chromosomes in an underwound state. Negative supercoiling favors strand separation, and DNA replication, transcription, recombination and repair, all of which involve strand separation. Also able to catalyze the interconversion of other topological isomers of dsDNA rings, including catenanes and knotted rings. Type II topoisomerases break and join 2 DNA strands simultaneously in an ATP-dependent manner. The sequence is that of DNA gyrase subunit A from Deinococcus deserti (strain DSM 17065 / CIP 109153 / LMG 22923 / VCD115).